Consider the following 472-residue polypeptide: Nucleoporin NUP49/NSP49 (472 aa).

An FG 1 repeat occupies 2–3; the sequence is FG. A GLFG 1 repeat occupies 14-17; the sequence is GLFG. Positions 28 to 104 are disordered; sequence NTGFSFGGTQ…TANTGGGLFG (77 aa). One copy of the FG 2 repeat lies at 33–34; that stretch reads FG. The stretch at 48–51 is one GLFG 2 repeat; it reads GLFG. A compositionally biased stretch (low complexity) spans 64 to 80; it reads SFGQQQQQSQTNAFGGS. FG repeat units follow at residues 65–66 and 77–78; these read FG. GLFG repeat units lie at residues 86–89 and 101–104; these read GLFG. The stretch at 113 to 116 is one SLFG 1 repeat; that stretch reads SLFG. 2 GLFG repeats span residues 125-128 and 148-151; these read GLFG. Residues 159 to 162 form an SLFG 2 repeat; the sequence is SLFG. The GLFG 7; approximate repeat unit spans residues 175-178; that stretch reads GMFG. One copy of the SLFG 3 repeat lies at 185–188; it reads SLFG. Residues 199-202 form a GLFG 8 repeat; the sequence is GLFG. An SLFG 4 repeat occupies 210–213; that stretch reads SLFG. Residues 211 to 242 form a disordered region; the sequence is LFGSSNNNNNNNNSNNIMSASGGLFGNQQQQL. Positions 214–226 are enriched in low complexity; it reads SSNNNNNNNNSNN. The stretch at 233 to 236 is one GLFG 9 repeat; sequence GLFG.

It belongs to the nucleoporin GLFG family. As to quaternary structure, component of the nuclear pore complex (NPC). NPC constitutes the exclusive means of nucleocytoplasmic transport. NPCs allow the passive diffusion of ions and small molecules and the active, nuclear transport receptor-mediated bidirectional transport of macromolecules such as proteins, RNAs, ribonucleoparticles (RNPs), and ribosomal subunits across the nuclear envelope. Due to its 8-fold rotational symmetry, all subunits are present with 8 copies or multiples thereof. NUP49 is part of the NUP57 subcomplex (NIC96, NSP1, NUP49, NUP57) interacting with NUP57. Interacts through its FG repeats with karyopherins.

It localises to the nucleus. The protein resides in the nuclear pore complex. Its subcellular location is the nucleus membrane. Functions as a component of the nuclear pore complex (NPC). NPC components, collectively referred to as nucleoporins (NUPs), can play the role of both NPC structural components and of docking or interaction partners for transiently associated nuclear transport factors. Active directional transport is assured by both, a Phe-Gly (FG) repeat affinity gradient for these transport factors across the NPC and a transport cofactor concentration gradient across the nuclear envelope (GSP1 and GSP2 GTPases associated predominantly with GTP in the nucleus, with GDP in the cytoplasm). NUP49 plays an important role in several nuclear transport pathways including poly(A)+ RNA, tRNA, and pre-ribosome transport. This is Nucleoporin NUP49/NSP49 (NUP49) from Saccharomyces cerevisiae (strain ATCC 204508 / S288c) (Baker's yeast).